Here is a 282-residue protein sequence, read N- to C-terminus: MSSYANHQALAGLTLGKSTDYRDTYDASLLQGVPRSLNRDPLGLKADNLPFHGTDIWTLYELSWLNAKGLPQVAVGHVELDYTSVNLIESKSFKLYLNSFNQTRFNNWDEVRQTLERDLSTCAQGKVSVALYRLDELEGQPIGHFNGTCIDDQDITIDNYEFTTDYLENATSGEKVVEETLVSHLLKSNCLITHQPDWGSIQIQYRGRQIDREKLLRYLVSFRHHNEFHEQCVERIFNDLLRFCQPEKLSVYARYTRRGGLDINPWRSNNDFVPSTTRLVRQ.

Substrate is bound at residue Ile88–Ser90. An NADPH-binding site is contributed by Ser90–Lys91. Cys190 acts as the Thioimide intermediate in catalysis. Asp197 functions as the Proton donor in the catalytic mechanism. A substrate-binding site is contributed by His229–Glu230. An NADPH-binding site is contributed by Arg258 to Gly259.

Belongs to the GTP cyclohydrolase I family. QueF type 2 subfamily. Homodimer.

It localises to the cytoplasm. It catalyses the reaction 7-aminomethyl-7-carbaguanine + 2 NADP(+) = 7-cyano-7-deazaguanine + 2 NADPH + 3 H(+). It functions in the pathway tRNA modification; tRNA-queuosine biosynthesis. Its function is as follows. Catalyzes the NADPH-dependent reduction of 7-cyano-7-deazaguanine (preQ0) to 7-aminomethyl-7-deazaguanine (preQ1). In Escherichia coli O81 (strain ED1a), this protein is NADPH-dependent 7-cyano-7-deazaguanine reductase.